We begin with the raw amino-acid sequence, 312 residues long: MNITFLGTSSGVPSLTRNVSSLALKLSQSSEVWLFDCGEGTQHQIMKSNIKSSQIKKIFITHMHGDHIYGLPGLLATLGLSGNSNGIEIYGPLGLRSFISSALSSSFCKLSFPLHFVEVENFASENKILFENNKLKVNCACLKHKIPAYGYRVSEKDKPGIFDIKKAESMKIAPGPIYSKLQQGKEVLLPDGRTVNGKEFCGPPRKGESFVYCTDTVFSESAVSLSKNADLLVHESTFSQEDESMAYEKLHSTTIMAAKTALLSNTKKLIITHLSPRYTSKNSITPSDLLKEAQKVFPNTHLAKDFLVADIK.

Zn(2+)-binding residues include His-62, His-64, Asp-66, His-67, His-144, Asp-215, and His-273. Asp-66 acts as the Proton acceptor in catalysis.

The protein belongs to the RNase Z family. Homodimer. Requires Zn(2+) as cofactor.

The catalysed reaction is Endonucleolytic cleavage of RNA, removing extra 3' nucleotides from tRNA precursor, generating 3' termini of tRNAs. A 3'-hydroxy group is left at the tRNA terminus and a 5'-phosphoryl group is left at the trailer molecule.. Its function is as follows. Zinc phosphodiesterase, which displays some tRNA 3'-processing endonuclease activity. Probably involved in tRNA maturation, by removing a 3'-trailer from precursor tRNA. The sequence is that of Ribonuclease Z from Prochlorococcus marinus (strain MIT 9312).